We begin with the raw amino-acid sequence, 199 residues long: Ribonuclease HII (199 aa).

The 199-residue stretch at 1–199 (MCVCGIDEAG…TYKNLVQGHI (199 aa)) folds into the RNase H type-2 domain. Residues Asp7, Glu8, and Asp97 each contribute to the a divalent metal cation site.

It belongs to the RNase HII family. Mn(2+) is required as a cofactor. Mg(2+) serves as cofactor.

Its subcellular location is the cytoplasm. It carries out the reaction Endonucleolytic cleavage to 5'-phosphomonoester.. Functionally, endonuclease that specifically degrades the RNA of RNA-DNA hybrids. This is Ribonuclease HII from Picrophilus torridus (strain ATCC 700027 / DSM 9790 / JCM 10055 / NBRC 100828 / KAW 2/3).